A 409-amino-acid polypeptide reads, in one-letter code: Arginine deiminase (409 aa).

C399 acts as the Amidino-cysteine intermediate in catalysis.

This sequence belongs to the arginine deiminase family.

It localises to the cytoplasm. It catalyses the reaction L-arginine + H2O = L-citrulline + NH4(+). Its pathway is amino-acid degradation; L-arginine degradation via ADI pathway; carbamoyl phosphate from L-arginine: step 1/2. The protein is Arginine deiminase of Streptococcus pneumoniae serotype 19F (strain G54).